The primary structure comprises 343 residues: Autoinducer 2 import system permease protein LsrC (343 aa).

Helical transmembrane passes span 13 to 33 (FLAILALFGVLVALNPAYLSF), 38 to 58 (MIFASSQILILLALGAALVML), 61 to 81 (NIDVSVGSTVGLCAIAVGVAL), 92 to 112 (LFALAIGALAGAFNGLLVVGL), 114 to 134 (IPAIVATLGTLGLYRGAMLLW), 154 to 174 (VALGVSPLGMAVLFLVLIGAW), 212 to 232 (INGMLAACAGIVFASQIGFVP), 251 to 271 (GISLLGGTGTLIGAFLGAFFL), and 283 to 303 (LPAWWNDFIAGLVLLGVLVLD). Positions 321-343 (RFQPGNKGGKHVTPFPKRKKEVA) are disordered.

Belongs to the binding-protein-dependent transport system permease family. AraH/RbsC subfamily. As to quaternary structure, the complex is composed of two ATP-binding proteins (LsrA), two transmembrane proteins (LsrC and LsrD) and a solute-binding protein (LsrB).

The protein localises to the cell inner membrane. Part of the ABC transporter complex LsrABCD involved in autoinducer 2 (AI-2) import. Probably responsible for the translocation of the substrate across the membrane. This is Autoinducer 2 import system permease protein LsrC (lsrC) from Enterobacter sp. (strain 638).